Consider the following 30-residue polypeptide: Dermaseptin-3.4TR (30 aa).

As to expression, expressed by the skin glands.

It is found in the secreted. Functionally, has antimicrobial activity. This chain is Dermaseptin-3.4TR, found in Phyllomedusa trinitatis (Trinidad leaf frog).